The sequence spans 127 residues: Large ribosomal subunit protein eL32B (127 aa).

This sequence belongs to the eukaryotic ribosomal protein eL32 family. In terms of assembly, component of the large ribosomal subunit (LSU). Mature yeast ribosomes consist of a small (40S) and a large (60S) subunit. The 40S small subunit contains 1 molecule of ribosomal RNA (18S rRNA) and at least 33 different proteins. The large 60S subunit contains 3 rRNA molecules (25S, 5.8S and 5S rRNA) and at least 46 different proteins.

It is found in the cytoplasm. It localises to the nucleus. The protein resides in the nucleolus. Functionally, component of the ribosome, a large ribonucleoprotein complex responsible for the synthesis of proteins in the cell. The small ribosomal subunit (SSU) binds messenger RNAs (mRNAs) and translates the encoded message by selecting cognate aminoacyl-transfer RNA (tRNA) molecules. The large subunit (LSU) contains the ribosomal catalytic site termed the peptidyl transferase center (PTC), which catalyzes the formation of peptide bonds, thereby polymerizing the amino acids delivered by tRNAs into a polypeptide chain. The nascent polypeptides leave the ribosome through a tunnel in the LSU and interact with protein factors that function in enzymatic processing, targeting, and the membrane insertion of nascent chains at the exit of the ribosomal tunnel. This Schizosaccharomyces pombe (strain 972 / ATCC 24843) (Fission yeast) protein is Large ribosomal subunit protein eL32B (rpl3201).